We begin with the raw amino-acid sequence, 727 residues long: Phosphoribosylformylglycinamidine synthase subunit PurL (727 aa).

The active site involves histidine 47. Tyrosine 50 and lysine 82 together coordinate ATP. Residue glutamate 84 coordinates Mg(2+). Residues 85 to 88 and arginine 107 each bind substrate; that span reads SHNH. Histidine 86 acts as the Proton acceptor in catalysis. Mg(2+) is bound at residue aspartate 108. Glutamine 229 contributes to the substrate binding site. Aspartate 257 is a binding site for Mg(2+). A substrate-binding site is contributed by 301–303; the sequence is ESQ. ATP contacts are provided by aspartate 486 and glycine 523. Position 524 (asparagine 524) interacts with Mg(2+). Position 526 (serine 526) interacts with substrate.

This sequence belongs to the FGAMS family. Monomer. Part of the FGAM synthase complex composed of 1 PurL, 1 PurQ and 2 PurS subunits.

It is found in the cytoplasm. The catalysed reaction is N(2)-formyl-N(1)-(5-phospho-beta-D-ribosyl)glycinamide + L-glutamine + ATP + H2O = 2-formamido-N(1)-(5-O-phospho-beta-D-ribosyl)acetamidine + L-glutamate + ADP + phosphate + H(+). The protein operates within purine metabolism; IMP biosynthesis via de novo pathway; 5-amino-1-(5-phospho-D-ribosyl)imidazole from N(2)-formyl-N(1)-(5-phospho-D-ribosyl)glycinamide: step 1/2. Its function is as follows. Part of the phosphoribosylformylglycinamidine synthase complex involved in the purines biosynthetic pathway. Catalyzes the ATP-dependent conversion of formylglycinamide ribonucleotide (FGAR) and glutamine to yield formylglycinamidine ribonucleotide (FGAM) and glutamate. The FGAM synthase complex is composed of three subunits. PurQ produces an ammonia molecule by converting glutamine to glutamate. PurL transfers the ammonia molecule to FGAR to form FGAM in an ATP-dependent manner. PurS interacts with PurQ and PurL and is thought to assist in the transfer of the ammonia molecule from PurQ to PurL. In Petrotoga mobilis (strain DSM 10674 / SJ95), this protein is Phosphoribosylformylglycinamidine synthase subunit PurL.